Here is a 115-residue protein sequence, read N- to C-terminus: Protachykinin-1 (115 aa).

An N-terminal signal peptide occupies residues 1-19 (MKILVALAVLALVSTQLFA). A propeptide spanning residues 20–56 (EDIRANDDLNYWSDWSDSDQIKEELPEPFEHLLQRIA) is cleaved from the precursor. Residues Met68 and Met92 each carry the methionine amide modification.

The protein belongs to the tachykinin family. Post-translationally, the substance P form is cleaved at Pro-59 by the prolyl endopeptidase FAP (seprase) activity (in vitro). Substance P is also cleaved and degraded by Angiotensin-converting enzyme (ACE) and neprilysin (MME).

Its subcellular location is the secreted. Tachykinins are active peptides which excite neurons, evoke behavioral responses, are potent vasodilators and secretagogues, and contract (directly or indirectly) many smooth muscles. The sequence is that of Protachykinin-1 (TAC1) from Oryctolagus cuniculus (Rabbit).